A 182-amino-acid chain; its full sequence is UPF0301 protein CHU_1773 (182 aa).

It belongs to the UPF0301 (AlgH) family.

The chain is UPF0301 protein CHU_1773 from Cytophaga hutchinsonii (strain ATCC 33406 / DSM 1761 / CIP 103989 / NBRC 15051 / NCIMB 9469 / D465).